The chain runs to 481 residues: Guanine nucleotide exchange factor C9orf72 (481 aa).

One can recognise a uDENN C9ORF72-type domain in the interval serine 23 to serine 194. Residues aspartate 200–threonine 343 enclose the cDENN C9ORF72-type domain. A dDENN C9ORF72-type domain is found at valine 370–phenylalanine 464. Positions serine 461–phenylalanine 481 are required for the homodimerization of the C9orf72-SMCR8 complex.

As to quaternary structure, component of the C9orf72-SMCR8 complex, at least composed of C9orf72, SMCR8 and WDR41. The complex is formed of two protomers, each individually consisting of one molecule each of C9orf72, SMCR8 and WDR41. The protomers homodimerize via an interaction between C9orf72 (via C-terminus) and SMCR8 (via N-terminus). Within each protomer SMCR8 (via DENN domain) acts as a bridging protein between WDR41 (via C-terminus and N-terminus) and C9orf72 (via C-terminus). The C9orf72-SMCR8 complex associates with the ULK1/ATG1 kinase complex. Interacts with ULK1/ATG1 kinase complex members ULK1, ATG13 and RB1CC1. Interacts with SMCR8; the interaction is direct. Interacts with HNRNPA1, HNRNPA2B1 and UBQLN2. Interacts with small Rab GTPase RAB1A; the interaction mediates recruitment of RAB1A to the ULK1/ATG1 kinase complex. Also interacts with small Rab GTPase RAB7A. Interacts with cofilin. Interacts with GTP-binding proteins ARF1 and ARF6. Interacts with the DLG4/PSD-95. Interacts with CARM1 (via PH domain-like fold). Interacts with RAB39A and RAB39B (in GDP-bound forms); functions as GEF for RAB39A and RAB39B. Both isoforms are widely expressed, including kidney, lung, liver, heart, testis and several brain regions, such as cerebellum. Also expressed in the frontal cortex and in lymphoblasts (at protein level).

The protein resides in the cytoplasm. It is found in the nucleus. The protein localises to the P-body. Its subcellular location is the stress granule. It localises to the endosome. The protein resides in the lysosome. It is found in the cytoplasmic vesicle. The protein localises to the autophagosome. Its subcellular location is the autolysosome. It localises to the secreted. The protein resides in the cell projection. It is found in the axon. The protein localises to the growth cone. Its subcellular location is the perikaryon. It localises to the dendrite. The protein resides in the presynapse. It is found in the postsynapse. The protein localises to the nucleus membrane. Acts as a guanine-nucleotide releasing factor (GEF) for Rab GTPases by promoting the conversion of inactive RAB-GDP to the active form RAB-GTP. Acts as a GEF for RAB39A which enables HOPS-mediated autophagosome-lysosome membrane tethering and fusion in mammalian autophagy. Component of the C9orf72-SMCR8 complex where both subunits display GEF activity and that regulates autophagy. As part of the C9orf72-SMCR8-WDR41 (CSW) complex, functions as GEF for RAB8A and RAB39B, thereby promoting autophagosome maturation. As part of the C9orf72-SMCR8 complex, also functions as GTPase activating protein (GAP) for RAB8A and RAB11A in vitro. The C9orf72-SMCR8 complex also acts as a regulator of autophagy initiation by interacting with the ULK1/ATG1 kinase complex and modulating its protein kinase activity. Promotes initiation of autophagy by regulating the RAB1A-dependent trafficking of the ULK1/ATG1 kinase complex to the phagophore which leads to autophagosome formation. Acts as a regulator of mTORC1 signaling by promoting phosphorylation of mTORC1 substrates. Plays a role in endosomal trafficking. May be involved in regulating the maturation of phagosomes to lysosomes. Promotes the lysosomal localization and lysosome-mediated degradation of CARM1 which leads to inhibition of starvation-induced lipid metabolism. Regulates actin dynamics in motor neurons by inhibiting the GTP-binding activity of ARF6, leading to ARF6 inactivation. This reduces the activity of the LIMK1 and LIMK2 kinases which are responsible for phosphorylation and inactivation of cofilin, leading to CFL1/cofilin activation. Positively regulates axon extension and axon growth cone size in spinal motor neurons. Required for SMCR8 protein expression and localization at pre- and post-synaptic compartments in the forebrain, also regulates protein abundance of RAB3A and GRIA1/GLUR1 in post-synaptic compartments in the forebrain and hippocampus. Plays a role within the hematopoietic system in restricting inflammation and the development of autoimmunity. Its function is as follows. Regulates stress granule assembly in response to cellular stress. In terms of biological role, does not play a role in regulation of stress granule assembly in response to cellular stress. The protein is Guanine nucleotide exchange factor C9orf72 of Homo sapiens (Human).